Here is a 980-residue protein sequence, read N- to C-terminus: Peroxisomal ATPase PEX6 (980 aa).

At R119 the chain carries Omega-N-methylarginine. ATP contacts are provided by residues G470–T477 and G744–T751.

Belongs to the AAA ATPase family. As to quaternary structure, interacts with PEX1; forming the PEX1-PEX6 AAA ATPase complex, which is composed of a heterohexamer formed by a trimer of PEX1-PEX6 dimers. Interacts with PEX26; interaction is direct and promotes recruitment to peroxisomal membranes. Interacts with ZFAND6.

The protein resides in the cytoplasm. It is found in the cytosol. Its subcellular location is the peroxisome membrane. The protein localises to the cell projection. It localises to the cilium. The protein resides in the photoreceptor outer segment. The catalysed reaction is ATP + H2O = ADP + phosphate + H(+). Functionally, component of the PEX1-PEX6 AAA ATPase complex, a protein dislocase complex that mediates the ATP-dependent extraction of the PEX5 receptor from peroxisomal membranes, an essential step for PEX5 recycling. Specifically recognizes PEX5 monoubiquitinated at 'Cys-11', and pulls it out of the peroxisome lumen through the PEX2-PEX10-PEX12 retrotranslocation channel. Extraction by the PEX1-PEX6 AAA ATPase complex is accompanied by unfolding of the TPR repeats and release of bound cargo from PEX5. The sequence is that of Peroxisomal ATPase PEX6 from Cricetulus griseus (Chinese hamster).